The sequence spans 159 residues: Small ribosomal subunit protein bS6 (159 aa).

The segment covering 93–151 has biased composition (basic and acidic residues); the sequence is VDEHEEGPSAMMRKADRDRERDDRGPREGGFRGDREGRGDREGGGFRGDRGPRRPREDA. Residues 93–159 are disordered; sequence VDEHEEGPSA…DADTAAASEE (67 aa).

This sequence belongs to the bacterial ribosomal protein bS6 family.

Binds together with bS18 to 16S ribosomal RNA. In Rhodopseudomonas palustris (strain HaA2), this protein is Small ribosomal subunit protein bS6.